The sequence spans 340 residues: Probable cyclic nucleotide phosphodiesterase PsycPRwf_0181 (340 aa).

The disordered stretch occupies residues 1–36; the sequence is MAPLPHSVSPRHTQVADNGRLSEPTDYHPPTEISTD. The Fe cation site is built by Asp-47, His-49, Asp-128, Asn-158, His-237, His-276, and His-278. AMP is bound by residues His-49, Asp-128, and 158–159; that span reads NH. AMP is bound at residue His-278.

It belongs to the cyclic nucleotide phosphodiesterase class-III family. It depends on Fe(2+) as a cofactor.

The polypeptide is Probable cyclic nucleotide phosphodiesterase PsycPRwf_0181 (Psychrobacter sp. (strain PRwf-1)).